A 496-amino-acid polypeptide reads, in one-letter code: 7,8-epoxymelianol synthase CYP88A154 (496 aa).

The chain crosses the membrane as a helical span at residues 11-31 (FNFLWLILAIFVGTYVVLFGF). A heme-binding site is contributed by cysteine 444.

This sequence belongs to the cytochrome P450 family. Heme serves as cofactor.

The protein resides in the membrane. The enzyme catalyses melianol + reduced [NADPH--hemoprotein reductase] + O2 = 7,8-epoxymelianol + oxidized [NADPH--hemoprotein reductase] + H2O + H(+). It functions in the pathway secondary metabolite biosynthesis; terpenoid biosynthesis. In terms of biological role, monooxygenase involved in the biosynthesis of glabretanes, limonoids and quassinoids triterpene natural products such as ailanthone, chaparrinone, glaucarubinone and amarolide, allelopathic degraded triterpene lactones inhibiting the growth of other plants, and possessing antimalarial, antifeedant, insecticidal, anti-inflammatory and anticancer activities. Catalyzes the epoxidation of melianol to produce 7,8-epoxymelianol. This is 7,8-epoxymelianol synthase CYP88A154 from Ailanthus altissima (Tree-of-heaven).